The sequence spans 3856 residues: Serine/threonine-protein kinase ATM (3856 aa).

The 55-residue stretch at 108 to 162 (VGNLVWVMTKYKKWWPGEVVDFKADAKESFMVRSIGQSHLVSWFASSKLKPFKES) folds into the PWWP domain. The interval 648–681 (GIPDLNGTNTEPTLVLPQVEPTQRRRRRKKEESP) is disordered. Positions 2727-3393 (VVAGSAVVCG…ILQLLALANG (667 aa)) constitute an FAT domain. The Bipartite nuclear localization signal signature appears at 3233–3249 (RKHKTKELEVFIKRFKS). Residues 3499–3811 (LSDSVTVMNG…GNKDATRALM (313 aa)) form the PI3K/PI4K catalytic domain. The G-loop stretch occupies residues 3505 to 3511 (VMNGINA). The catalytic loop stretch occupies residues 3678–3686 (GLGDRHAMN). Positions 3698–3722 (HIDLGVAFEQGLMLKTPERVPFRLT) are activation loop. The 33-residue stretch at 3824 to 3856 (EMRSIHGQAQQLIQDAIDTDRLSHMFPGWGAWM) folds into the FATC domain.

Belongs to the PI3/PI4-kinase family. In terms of assembly, interacts with RUG3. As to expression, ubiquitously expressed at low levels with slightly higher levels in flower buds.

Its subcellular location is the nucleus. It carries out the reaction L-seryl-[protein] + ATP = O-phospho-L-seryl-[protein] + ADP + H(+). The enzyme catalyses L-threonyl-[protein] + ATP = O-phospho-L-threonyl-[protein] + ADP + H(+). In terms of biological role, serine/threonine protein kinase which activates checkpoint signaling upon genotoxic stresses such as ionizing radiation (IR) or DNA replication stalling. Plays a central role in the perception and response to both stress-induced damage in somatic cells and developmentally programmed DNA damage during meiosis. Recognizes the substrate consensus sequence [ST]-Q. Phosphorylates histone variant H2AX to form H2AXS139ph at double strand breaks (DSBs), thereby regulating DNA damage response mechanism. Involved in transcriptional regulation of RAD51, PARP1, GR1, and LIG4 in response to DNA double strand breaks. Plays a dual role by activating the DNA damage response at dysfunctional telomeres and yet preventing this activation at functional telomeres. Not required for telomere length homeostasis. Regulates DNA damage response (DDR) synergistically with RUG3. Together with RUG3, involved in the splicing of the ND2/NAD2 mRNA. In Arabidopsis thaliana (Mouse-ear cress), this protein is Serine/threonine-protein kinase ATM.